Consider the following 74-residue polypeptide: MDTLRTEEIAAKALKRVHNDRYLLASLIFERVKELGEGAKPLVDMDVKTYKLPDIAMREIAEGKVELTSIEDRE.

This sequence belongs to the RNA polymerase subunit omega family. In terms of assembly, the RNAP catalytic core consists of 2 alpha, 1 beta/beta' and 1 omega subunit. When a sigma factor is associated with the core the holoenzyme is formed, which can initiate transcription.

It carries out the reaction RNA(n) + a ribonucleoside 5'-triphosphate = RNA(n+1) + diphosphate. Functionally, promotes RNA polymerase assembly. Latches the N- and C-terminal regions of the beta' subunit thereby facilitating its interaction with the beta and alpha subunits. The polypeptide is DNA-directed RNA polymerase subunit omega (Helicobacter hepaticus (strain ATCC 51449 / 3B1)).